An 89-amino-acid polypeptide reads, in one-letter code: Gibberellin-regulated protein 10 (89 aa).

The N-terminal stretch at 1–25 (MKFPAVKVLIISLLITSSLFILSTA) is a signal peptide.

Belongs to the GASA family. Post-translationally, six disulfide bonds may be present. In terms of tissue distribution, expressed in vasculature of rosette leaves and roots, cotyledon and root tips and developing seeds.

It localises to the secreted. In terms of biological role, gibberellin-regulated protein that may function in hormonal controlled steps of development such as seed germination, flowering and seed maturation. The polypeptide is Gibberellin-regulated protein 10 (GASA10) (Arabidopsis thaliana (Mouse-ear cress)).